Consider the following 363-residue polypeptide: tRNA dimethylallyltransferase (363 aa).

65-72 contributes to the ATP binding site; that stretch reads GPTASGKS. Residue 67-72 coordinates substrate; that stretch reads TASGKS. 2 interaction with substrate tRNA regions span residues 90–93 and 214–218; these read DSMQ and QRLIR.

The protein belongs to the IPP transferase family. Monomer. It depends on Mg(2+) as a cofactor.

It carries out the reaction adenosine(37) in tRNA + dimethylallyl diphosphate = N(6)-dimethylallyladenosine(37) in tRNA + diphosphate. Its function is as follows. Catalyzes the transfer of a dimethylallyl group onto the adenine at position 37 in tRNAs that read codons beginning with uridine, leading to the formation of N6-(dimethylallyl)adenosine (i(6)A). The sequence is that of tRNA dimethylallyltransferase from Rickettsia massiliae (strain Mtu5).